The sequence spans 180 residues: MKYNREKLKNKVCLAIIGMPHGIKGDVLLKILSSEPQRLKTYGTLYDDRGHSYEIVMLRMQKKNAIVHFKGVEDRSAAEALRGIHLYVARDQLVDDLTEDEFYQVDLIGLRVQDCTGRILGEVSGLFNFGAGDLLEMRLNTGKTVLIPFSKAAVLEVCIASGFLVVDPVAAGLSDGGENT.

Positions 99–172 constitute a PRC barrel domain; that stretch reads EDEFYQVDLI…FLVVDPVAAG (74 aa).

The protein belongs to the RimM family. As to quaternary structure, binds ribosomal protein uS19.

The protein localises to the cytoplasm. Functionally, an accessory protein needed during the final step in the assembly of 30S ribosomal subunit, possibly for assembly of the head region. Essential for efficient processing of 16S rRNA. May be needed both before and after RbfA during the maturation of 16S rRNA. It has affinity for free ribosomal 30S subunits but not for 70S ribosomes. The polypeptide is Ribosome maturation factor RimM (Bartonella henselae (strain ATCC 49882 / DSM 28221 / CCUG 30454 / Houston 1) (Rochalimaea henselae)).